The chain runs to 339 residues: Methylthioribose-1-phosphate isomerase (339 aa).

Substrate is bound by residues 50-52 (RGA), Arg84, and Gln186. The Proton donor role is filled by Asp227. 237 to 238 (NK) is a binding site for substrate.

This sequence belongs to the eIF-2B alpha/beta/delta subunits family. MtnA subfamily.

It catalyses the reaction 5-(methylsulfanyl)-alpha-D-ribose 1-phosphate = 5-(methylsulfanyl)-D-ribulose 1-phosphate. Its pathway is amino-acid biosynthesis; L-methionine biosynthesis via salvage pathway; L-methionine from S-methyl-5-thio-alpha-D-ribose 1-phosphate: step 1/6. Its function is as follows. Catalyzes the interconversion of methylthioribose-1-phosphate (MTR-1-P) into methylthioribulose-1-phosphate (MTRu-1-P). The chain is Methylthioribose-1-phosphate isomerase from Sulfurihydrogenibium sp. (strain YO3AOP1).